A 574-amino-acid polypeptide reads, in one-letter code: Urease subunit alpha (574 aa).

Positions 131–574 (GAIDSHIHFI…LPMAQRYLLL (444 aa)) constitute a Urease domain. Positions 136, 138, and 219 each coordinate Ni(2+). Lysine 219 carries the post-translational modification N6-carboxylysine. Substrate is bound at residue histidine 221. Histidine 248 and histidine 274 together coordinate Ni(2+). The Proton donor role is filled by histidine 322. Aspartate 362 is a binding site for Ni(2+). Positions 384–403 (KVQRGPLPEDAANPRGSRND) are disordered.

It belongs to the metallo-dependent hydrolases superfamily. Urease alpha subunit family. As to quaternary structure, heterotrimer of UreA (gamma), UreB (beta) and UreC (alpha) subunits. Three heterotrimers associate to form the active enzyme. Ni cation serves as cofactor. In terms of processing, carboxylation allows a single lysine to coordinate two nickel ions.

Its subcellular location is the cytoplasm. The catalysed reaction is urea + 2 H2O + H(+) = hydrogencarbonate + 2 NH4(+). It functions in the pathway nitrogen metabolism; urea degradation; CO(2) and NH(3) from urea (urease route): step 1/1. The chain is Urease subunit alpha from Prochlorococcus marinus (strain MIT 9313).